We begin with the raw amino-acid sequence, 215 residues long: Ribose-5-phosphate isomerase A (215 aa).

Substrate is bound by residues Thr-26 to Thr-29, Asp-79 to Asp-82, and Lys-92 to Gly-95. Glu-101 functions as the Proton acceptor in the catalytic mechanism. A substrate-binding site is contributed by Lys-119.

Belongs to the ribose 5-phosphate isomerase family. Homodimer.

The enzyme catalyses aldehydo-D-ribose 5-phosphate = D-ribulose 5-phosphate. Its pathway is carbohydrate degradation; pentose phosphate pathway; D-ribose 5-phosphate from D-ribulose 5-phosphate (non-oxidative stage): step 1/1. Functionally, catalyzes the reversible conversion of ribose-5-phosphate to ribulose 5-phosphate. The chain is Ribose-5-phosphate isomerase A from Xanthomonas oryzae pv. oryzae (strain MAFF 311018).